Consider the following 564-residue polypeptide: MDIKRTVLWVVFSFSLLMLWDNYNRYTGKPSIFFDNPTTQAAKPAAATDDGKTAAAPTADVPTSSAHAANATGVPDSVAPTKSEIVTITTDLIKADIDTVGGEIRHLELLTHHESSDSTKDIVLFDSTPPRTYLGQTGLIGGAYPNHKSLFTVRPGPRSLEAGDQVQLVLEAEQNGVKLVKTYTFKRGEYKIDIKHDVINKTAAAINPSLYLQLVRDGSKLNNESMFYSTFTGPAVYSDSDKFQKVTFESIEKGKIEHVVKAESGWIAMVQHYFVSAFVPPANVPREYFTKKLATNLYAVGAIMPMGAVAPGATQSMDATLYSGPQESKRLEAVAPGFELVKDYGWLTIIAKPIFWLMIQIHQLLGNWGWTIVVLTIVIKLAFFPLSAASYRSMAKMKLVTPKMTEIRTKYKGEPQKMNAAMMELYKKEKINPLGGCMPIVIQIPVFISLYWVLLASVEMRNAPWLWISDLASPDTLFGSYMIGSFHLTIGILPILMAISMFIQTKLNPTPPDPIQAKVMMFMPIAFSLMFFFFPAGLVLYWVVNNILSIAQQWTISKKMGIVN.

The helical transmembrane segment at 7–24 (VLWVVFSFSLLMLWDNYN) threads the bilayer. Residues 43–60 (KPAAATDDGKTAAAPTAD) are compositionally biased toward low complexity. Positions 43–76 (KPAAATDDGKTAAAPTADVPTSSAHAANATGVPD) are disordered. 6 helical membrane passes run 293–313 (LATN…APGA), 341–361 (VKDY…MIQI), 364–384 (LLGN…LAFF), 438–458 (MPIV…LASV), 483–503 (IGSF…SMFI), and 524–544 (PIAF…YWVV).

Belongs to the OXA1/ALB3/YidC family. Type 1 subfamily. As to quaternary structure, interacts with the Sec translocase complex via SecD. Specifically interacts with transmembrane segments of nascent integral membrane proteins during membrane integration.

It is found in the cell inner membrane. Its function is as follows. Required for the insertion and/or proper folding and/or complex formation of integral membrane proteins into the membrane. Involved in integration of membrane proteins that insert both dependently and independently of the Sec translocase complex, as well as at least some lipoproteins. Aids folding of multispanning membrane proteins. The protein is Membrane protein insertase YidC of Janthinobacterium sp. (strain Marseille) (Minibacterium massiliensis).